The sequence spans 501 residues: Ribose import ATP-binding protein RbsA (501 aa).

2 ABC transporter domains span residues 8–245 and 255–500; these read LKMV…VGRT and VKKG…VGIN. An ATP-binding site is contributed by 40–47; that stretch reads GENGAGKS.

Belongs to the ABC transporter superfamily. Ribose importer (TC 3.A.1.2.1) family. As to quaternary structure, the complex is composed of an ATP-binding protein (RbsA), two transmembrane proteins (RbsC) and a solute-binding protein (RbsB).

It localises to the cell membrane. The enzyme catalyses D-ribose(out) + ATP + H2O = D-ribose(in) + ADP + phosphate + H(+). Functionally, part of the ABC transporter complex RbsABC involved in ribose import. Responsible for energy coupling to the transport system. This Clostridium perfringens (strain 13 / Type A) protein is Ribose import ATP-binding protein RbsA.